A 206-amino-acid polypeptide reads, in one-letter code: LexA repressor (206 aa).

The segment at residues 28-48 (RAEIARRLGFKSANAAEEHLK) is a DNA-binding region (H-T-H motif). Active-site for autocatalytic cleavage activity residues include serine 123 and lysine 160.

It belongs to the peptidase S24 family. In terms of assembly, homodimer.

It catalyses the reaction Hydrolysis of Ala-|-Gly bond in repressor LexA.. Its function is as follows. Represses a number of genes involved in the response to DNA damage (SOS response), including recA and lexA. In the presence of single-stranded DNA, RecA interacts with LexA causing an autocatalytic cleavage which disrupts the DNA-binding part of LexA, leading to derepression of the SOS regulon and eventually DNA repair. The sequence is that of LexA repressor from Shewanella halifaxensis (strain HAW-EB4).